The sequence spans 203 residues: ATP-dependent Clp protease proteolytic subunit 2 (203 aa).

Serine 98 functions as the Nucleophile in the catalytic mechanism. The active site involves histidine 123.

This sequence belongs to the peptidase S14 family. In terms of assembly, fourteen ClpP subunits assemble into 2 heptameric rings which stack back to back to give a disk-like structure with a central cavity, resembling the structure of eukaryotic proteasomes.

The protein resides in the cytoplasm. The enzyme catalyses Hydrolysis of proteins to small peptides in the presence of ATP and magnesium. alpha-casein is the usual test substrate. In the absence of ATP, only oligopeptides shorter than five residues are hydrolyzed (such as succinyl-Leu-Tyr-|-NHMec, and Leu-Tyr-Leu-|-Tyr-Trp, in which cleavage of the -Tyr-|-Leu- and -Tyr-|-Trp bonds also occurs).. Cleaves peptides in various proteins in a process that requires ATP hydrolysis. Has a chymotrypsin-like activity. Plays a major role in the degradation of misfolded proteins. This Chlamydia trachomatis serovar A (strain ATCC VR-571B / DSM 19440 / HAR-13) protein is ATP-dependent Clp protease proteolytic subunit 2.